The sequence spans 557 residues: Acetylcholine receptor subunit alpha-L1 (557 aa).

The first 23 residues, 1–23, serve as a signal peptide directing secretion; the sequence is MAAALPPMLLLLLLLLLHHPAAA. The Extracellular segment spans residues 24 to 244; sequence NPDAKRLYDD…NITLRRKTLF (221 aa). N47 carries an N-linked (GlcNAc...) asparagine glycan. Intrachain disulfides connect C151–C165 and C224–C225. A glycan (N-linked (GlcNAc...) asparagine) is linked at N235. The next 3 helical transmembrane spans lie at 245 to 266, 274 to 294, and 308 to 329; these read YTVN…VFYL, IALC…ISEI, and YLLF…VLNV. At 330–500 the chain is on the cytoplasmic side; the sequence is HYRKPSTHKM…EFDAEDQDWG (171 aa). Residues 501-523 traverse the membrane as a helical segment; sequence FVAMVLDRLFLWIFTIASIVGTF.

The protein belongs to the ligand-gated ion channel (TC 1.A.9) family. Acetylcholine receptor (TC 1.A.9.1) subfamily.

It localises to the postsynaptic cell membrane. It is found in the cell membrane. Its function is as follows. After binding acetylcholine, the AChR responds by an extensive change in conformation that affects all subunits and leads to opening of an ion-conducting channel across the plasma membrane. This is Acetylcholine receptor subunit alpha-L1 from Schistocerca gregaria (Desert locust).